The primary structure comprises 460 residues: Nuclear transport factor 2 (460 aa).

One can recognise an NTF2 domain in the interval 15 to 131 (VGRAFVEQYY…YFVLNDVFRF (117 aa)). 3 disordered regions span residues 207–226 (EPPTQISHNEILSVPQGDAP), 238–289 (KSSP…VDVE), and 361–460 (RQAV…GGSS). Positions 293–370 (HSIYVRNLPF…RQAVVEEKKT (78 aa)) constitute an RRM domain. Positions 373-382 (RGGGNNGGSR) are enriched in gly residues. Positions 383–394 (GRYFSGRGSFRN) are enriched in low complexity. Gly residues-rich tracts occupy residues 399–416 (GGRGGGGRGGYGRGGGEF) and 450–460 (GRGGARGGGSS).

In terms of assembly, interacts with MBD6.

The protein localises to the cytoplasm. It localises to the nucleus. Functionally, involved in RNA-directed DNA methylation (RdDM). This Arabidopsis thaliana (Mouse-ear cress) protein is Nuclear transport factor 2.